The primary structure comprises 360 residues: Peptide chain release factor 1 (360 aa).

At glutamine 237 the chain carries N5-methylglutamine.

The protein belongs to the prokaryotic/mitochondrial release factor family. Post-translationally, methylated by PrmC. Methylation increases the termination efficiency of RF1.

It localises to the cytoplasm. Peptide chain release factor 1 directs the termination of translation in response to the peptide chain termination codons UAG and UAA. This Pseudomonas putida (strain W619) protein is Peptide chain release factor 1.